Here is a 398-residue protein sequence, read N- to C-terminus: Abhydrolase domain-containing protein 2 (398 aa).

At 1 to 4 (MSTA) the chain is on the cytoplasmic side. Residues 5-22 (FLTLIAVIVCILFRILNV) form a helical; Signal-anchor for type II membrane protein membrane-spanning segment. Residues 23–398 (HSQPLKPSVW…MMHEVGKVAP (376 aa)) lie on the Extracellular side of the membrane. An AB hydrolase-1 domain is found at 113–365 (VAICPGIANS…HGGHLGFYEG (253 aa)). Residues S192, D328, and H359 each act as charge relay system in the active site.

The protein belongs to the AB hydrolase superfamily. AB hydrolase 4 family.

Its subcellular location is the membrane. This chain is Abhydrolase domain-containing protein 2 (Hydr2), found in Drosophila melanogaster (Fruit fly).